The following is a 278-amino-acid chain: Imidazole glycerol phosphate synthase subunit HisF (278 aa).

Active-site residues include Asp11 and Asp130.

This sequence belongs to the HisA/HisF family. As to quaternary structure, heterodimer of HisH and HisF.

It localises to the cytoplasm. The enzyme catalyses 5-[(5-phospho-1-deoxy-D-ribulos-1-ylimino)methylamino]-1-(5-phospho-beta-D-ribosyl)imidazole-4-carboxamide + L-glutamine = D-erythro-1-(imidazol-4-yl)glycerol 3-phosphate + 5-amino-1-(5-phospho-beta-D-ribosyl)imidazole-4-carboxamide + L-glutamate + H(+). It participates in amino-acid biosynthesis; L-histidine biosynthesis; L-histidine from 5-phospho-alpha-D-ribose 1-diphosphate: step 5/9. Its function is as follows. IGPS catalyzes the conversion of PRFAR and glutamine to IGP, AICAR and glutamate. The HisF subunit catalyzes the cyclization activity that produces IGP and AICAR from PRFAR using the ammonia provided by the HisH subunit. This Thermodesulfovibrio yellowstonii (strain ATCC 51303 / DSM 11347 / YP87) protein is Imidazole glycerol phosphate synthase subunit HisF.